Consider the following 488-residue polypeptide: (S)-N-methylcoclaurine 3'-hydroxylase isozyme 2 (488 aa).

The helical transmembrane segment at 3 to 23 (VVTVALIAVIISSILYLLFGS) threads the bilayer. Heme is bound at residue Cys430.

This sequence belongs to the cytochrome P450 family. It depends on heme as a cofactor.

The protein localises to the endoplasmic reticulum membrane. The protein resides in the microsome membrane. It carries out the reaction (S)-N-methylcoclaurine + reduced [NADPH--hemoprotein reductase] + O2 = (S)-3'-hydroxy-N-methylcoclaurine + oxidized [NADPH--hemoprotein reductase] + H2O + H(+). Its pathway is alkaloid biosynthesis; (S)-reticuline biosynthesis; (S)-reticuline from (S)-norcoclaurine: step 3/4. Its function is as follows. 3'-hydroxylation of (S)-N-methylcoclaurine. This is (S)-N-methylcoclaurine 3'-hydroxylase isozyme 2 (CYP80B2) from Eschscholzia californica (California poppy).